Here is a 243-residue protein sequence, read N- to C-terminus: 2-O-methyltransferase NoeI (243 aa).

This sequence belongs to the FkbM methyltransferase family.

It is found in the cytoplasm. In terms of biological role, required for 2-O-methylation of the fucosyl group of Nod factors. This is 2-O-methyltransferase NoeI (noeI) from Sinorhizobium fredii (strain NBRC 101917 / NGR234).